Here is a 242-residue protein sequence, read N- to C-terminus: UPF0173 metal-dependent hydrolase APE_1117 (242 aa).

It belongs to the UPF0173 family.

This Aeropyrum pernix (strain ATCC 700893 / DSM 11879 / JCM 9820 / NBRC 100138 / K1) protein is UPF0173 metal-dependent hydrolase APE_1117.